Reading from the N-terminus, the 287-residue chain is MATFELIPYRLYLSQSNTWIHRIKAEIKIYIVALLWISIFIFSYFKLCIIALSLIAISFTIRSKQNIIQKHLLQTLLMTFLTTVLSFSVAISYKQYAEQEQSQYLSDSKKYKNSSSYYYIQIANDQRIKRQYLITTLKPSLYFFITIYSIKLVMITTSPEVLVITIYRSRIINKIFKNELLFIFLLSSHIVTSIINRIDKVIQVTSLRGSLNLYNSLTRPLMFSLLIFQVFFLEIIRESKEIAQALYTRNLNQENNNFLKIYTVKSNFSDRLNIIISTLYFIILALA.

6 helical membrane-spanning segments follow: residues 32–52, 72–92, 133–153, 175–195, 216–236, and 266–286; these read VALLWISIFIFSYFKLCIIAL, LLQTLLMTFLTTVLSFSVAIS, LITTLKPSLYFFITIYSIKLV, IFKNELLFIFLLSSHIVTSII, SLTRPLMFSLLIFQVFFLEII, and SNFSDRLNIIISTLYFIILAL.

The protein belongs to the ycf92 family.

Its subcellular location is the plastid. It is found in the chloroplast membrane. This is an uncharacterized protein from Pyropia yezoensis (Susabi-nori).